The primary structure comprises 178 residues: Small ribosomal subunit protein uS4 (178 aa).

The region spanning arginine 104–histidine 166 is the S4 RNA-binding domain. The tract at residues proline 157–glutamine 178 is disordered.

Belongs to the universal ribosomal protein uS4 family. In terms of assembly, part of the 30S ribosomal subunit. Contacts protein S5. The interaction surface between S4 and S5 is involved in control of translational fidelity.

In terms of biological role, one of the primary rRNA binding proteins, it binds directly to 16S rRNA where it nucleates assembly of the body of the 30S subunit. Its function is as follows. With S5 and S12 plays an important role in translational accuracy. This is Small ribosomal subunit protein uS4 from Methanococcus maripaludis (strain C7 / ATCC BAA-1331).